Reading from the N-terminus, the 344-residue chain is Putative voltage-gated potassium channel subunit beta (344 aa).

NADP(+) contacts are provided by Trp33, Asp62, Tyr67, Ser167, Gln193, Trp222, Ser223, Pro224, Leu225, Lys233, Arg243, Gly301, Ser303, Gln307, Glu310, and Asn311. Tyr67 serves as the catalytic Proton donor/acceptor.

It belongs to the shaker potassium channel beta subunit family. As to quaternary structure, forms heteromultimeric complexes with potassium channel alpha subunits.

It localises to the cytoplasm. The protein resides in the nucleus. Its function is as follows. Probable accessory potassium channel protein which modulates the activity of the pore-forming alpha subunit. This is Putative voltage-gated potassium channel subunit beta from Schizosaccharomyces pombe (strain 972 / ATCC 24843) (Fission yeast).